Here is a 123-residue protein sequence, read N- to C-terminus: Large ribosomal subunit protein bL12 (123 aa).

This sequence belongs to the bacterial ribosomal protein bL12 family. As to quaternary structure, homodimer. Part of the ribosomal stalk of the 50S ribosomal subunit. Forms a multimeric L10(L12)X complex, where L10 forms an elongated spine to which 2 to 4 L12 dimers bind in a sequential fashion. Binds GTP-bound translation factors.

Forms part of the ribosomal stalk which helps the ribosome interact with GTP-bound translation factors. Is thus essential for accurate translation. The sequence is that of Large ribosomal subunit protein bL12 from Clostridium acetobutylicum (strain ATCC 824 / DSM 792 / JCM 1419 / IAM 19013 / LMG 5710 / NBRC 13948 / NRRL B-527 / VKM B-1787 / 2291 / W).